The sequence spans 635 residues: MQLLLIHSDYIEYEVKKSTPVAEEIEESFKQGRLEDALTAFMAVESFDEANPQEIIDRAVSEIENVAGQVKAENIMLYPYAHLSSDLSSPKVAVSVLKGIENALEGKYNVMRAPFGWYKAFRISCKGHPLSELSRTIRLEGAVPCGKVVSLDAEKKEVVSEALKAEDSAKSYWRILTPDGELHDAETFDLTGHDNLQKFVDYEISKNRNIEKAPPHVELMRRLEIADYEPGSDSGNMRYYPKGRLMKSLIENFVLEESSKIGAMEVETPLMYDMNHPTLKKYLDRFPARQYSIESDKRHMFLRFAACFGQFLMNHDMTISYKNLPLKMIEMTRYSFRKEQRGELVGLRRLRAFTMPDMHTLCPDMEAAISQFGEQYSMCIDILRKIGIDVSDFEVAIRFTREFYDDNREFITELAKKVDKPVLVEMWDTRFFYFVLKFEFNFVDAIAKASALSTVQIDVENAERYDINYVDANGKINRPTILHCSPSGAIERCIYALLEKAAMDAEEGKVPNLPVWLSPTQVRVIPIAERHMDFAQEVADSLLCRADIDDREETVGKKIRDAGREWIPYVAVIGDSEVESGKVTVTIRAESEPKKPMKVEMTAEELSERVFNEIGDMPYRSLPLAKLLSMRPKFI.

The editing domain stretch occupies residues 1 to 144; it reads MQLLLIHSDY…RTIRLEGAVP (144 aa). The segment at 215–514 is catalytic; that stretch reads PHVELMRRLE…AEEGKVPNLP (300 aa). Positions 307, 359, and 483 each coordinate Zn(2+).

The protein belongs to the class-II aminoacyl-tRNA synthetase family. Homodimer. It depends on Zn(2+) as a cofactor.

It localises to the cytoplasm. It catalyses the reaction tRNA(Thr) + L-threonine + ATP = L-threonyl-tRNA(Thr) + AMP + diphosphate + H(+). In terms of biological role, catalyzes the attachment of threonine to tRNA(Thr) in a two-step reaction: L-threonine is first activated by ATP to form Thr-AMP and then transferred to the acceptor end of tRNA(Thr). Also edits incorrectly charged L-seryl-tRNA(Thr). The protein is Threonine--tRNA ligase of Methanococcoides burtonii (strain DSM 6242 / NBRC 107633 / OCM 468 / ACE-M).